The following is a 232-amino-acid chain: Histone H1A (232 aa).

Low complexity predominate over residues 1–18; it reads MSDPAVEVTPAVPVASPA. Disordered stretches follow at residues 1 to 42 and 98 to 232; these read MSDP…THLP and LQTK…AKKA. One can recognise an H15 domain in the interval 39-113; it reads THLPVSDMVV…GASGSFKLPA (75 aa). Composition is skewed to basic residues over residues 131–141, 147–173, 181–214, and 222–232; these read KPKKAAAPKPK, KVKKTIAKKPKAATATKIKKPVAKTTK, AAKKAAPKPKAAPKPKAAKKETKPKKAAAPKAKK, and KAAKKPAAKKA.

This sequence belongs to the histone H1/H5 family.

It is found in the nucleus. Its subcellular location is the chromosome. Histones H1 are necessary for the condensation of nucleosome chains into higher-order structures. The sequence is that of Histone H1A from Chironomus tentans (Midge).